We begin with the raw amino-acid sequence, 349 residues long: MAKAGDKSSSSGKKSLKRKAAAEELQEAAGAGDVATESGVQPPKAAAFPPGFSISEIKNKERRHLMFTRWKQQQRKEKLAAKKKLKKEREALGDKAPPKPVPKTIDNQRVYDETTVDPNDEEVAYDEATDEFASYFNKQTSPKILITTSDRPHGRTVRLCEQLSTVIPNSHVYYRRGLALKKIIPQCIARDFTDLIVINEDRKTPNGLILSHLPNGPTAHFKMSSVRLRKEIKRRGKDPTEHIPEIILNNFTTRLGHSIGRMFASLFPHNPQFIGRQVATFHNQRDYIFFRFHRYIFRSEKKVGIQELGPRFTLKLRSLQKGTFDSKYGEYEWVHKPREMDTSRRKFHL.

The segment at 1–105 is disordered; it reads MAKAGDKSSS…APPKPVPKTI (105 aa). The span at 87 to 97 shows a compositional bias: basic and acidic residues; the sequence is KEREALGDKAP. One can recognise a Brix domain in the interval 142–325; the sequence is PKILITTSDR…LRSLQKGTFD (184 aa). Positions 303–320 are RNA-binding; the sequence is VGIQELGPRFTLKLRSLQ.

It localises to the nucleus. It is found in the nucleolus. In terms of biological role, may be required for ribosome biogenesis. In Pongo abelii (Sumatran orangutan), this protein is Ribosome production factor 1 (RPF1).